Here is a 373-residue protein sequence, read N- to C-terminus: Enoyl-[acyl-carrier-protein] reductase, mitochondrial (373 aa).

Residues 1–53 (MLVSQRVTGARARAPQLAGLLEAWYRHGRTTSSYSALSEPSRVRALVYGNHGD) constitute a mitochondrion transit peptide. Lys61 is modified (N6-acetyllysine; alternate). An N6-succinyllysine; alternate modification is found at Lys61. Residue Tyr94 is the Proton donor of the active site. Residues Asn167, 193–196 (NSGV), and 216–218 (RDR) contribute to the NADP(+) site. Residues Lys252 and Lys267 each carry the N6-acetyllysine; alternate modification. N6-succinyllysine; alternate occurs at positions 252 and 267. NADP(+) is bound by residues 285 to 288 (YGGM) and 310 to 312 (FWL). Lys316 bears the N6-succinyllysine mark. Lys368 serves as a coordination point for NADP(+).

Belongs to the zinc-containing alcohol dehydrogenase family. Quinone oxidoreductase subfamily. In terms of assembly, homodimer. As to expression, expressed in Purkinje cells (at protein level).

The protein resides in the mitochondrion. It catalyses the reaction a 2,3-saturated acyl-[ACP] + NADP(+) = a (2E)-enoyl-[ACP] + NADPH + H(+). The catalysed reaction is (2E)-butenoyl-[ACP] + NADPH + H(+) = butanoyl-[ACP] + NADP(+). It carries out the reaction (2E)-hexenoyl-[ACP] + NADPH + H(+) = hexanoyl-[ACP] + NADP(+). The enzyme catalyses (2E)-octenoyl-[ACP] + NADPH + H(+) = octanoyl-[ACP] + NADP(+). It catalyses the reaction (2E)-decenoyl-[ACP] + NADPH + H(+) = decanoyl-[ACP] + NADP(+). The catalysed reaction is (2E)-dodecenoyl-[ACP] + NADPH + H(+) = dodecanoyl-[ACP] + NADP(+). It carries out the reaction (2E)-tetradecenoyl-[ACP] + NADPH + H(+) = tetradecanoyl-[ACP] + NADP(+). The enzyme catalyses (2E)-hexadecenoyl-[ACP] + NADPH + H(+) = hexadecanoyl-[ACP] + NADP(+). Functionally, catalyzes the NADPH-dependent reduction of trans-2-enoyl thioesters in mitochondrial fatty acid synthesis (fatty acid synthesis type II). Fatty acid chain elongation in mitochondria uses acyl carrier protein (ACP) as an acyl group carrier, but the enzyme accepts both ACP and CoA thioesters as substrates in vitro. Displays a preference for medium-chain over short- and long-chain substrates. May provide the octanoyl chain used for lipoic acid biosynthesis, regulating protein lipoylation and mitochondrial respiratory activity particularly in Purkinje cells. Involved in iron homeostasis; affecting Fe-S cluster assembly and ceramide metabolism. Required for proper morphology and bioenergetic functions of mitochondria. Required for maintenance of neurons. In Mus musculus (Mouse), this protein is Enoyl-[acyl-carrier-protein] reductase, mitochondrial (Mecr).